The sequence spans 264 residues: Cell cycle regulator CcrZ (264 aa).

ATP-binding residues include Phe32, Trp70, and Gly73. Residues 157-164 (HGDVRHSN) carry the Brenner's motif [HXDhX3N] motif. Residue Asp159 is the Proton acceptor of the active site. Residues 173 to 196 (IYLVDWDSVRLTDRMFDVAHMLCH) carry the APH motif.

Belongs to the aminoglycoside phosphotransferase family. In terms of assembly, monomer in solution. Interacts with DnaA (via domains I (1-82) and III (111-326)). Interacts with DnaB. Interacts with FtsZ; the interaction is direct and ensures correct localization during the cell cycle.

The protein localises to the cytoplasm. It carries out the reaction D-ribose + ATP = D-ribose 5-phosphate + ADP + H(+). The catalysed reaction is 2-deoxy-D-ribose + ATP = 2-deoxy-D-ribose 5-phosphate + ADP + H(+). Plays a role in cell cycle regulation and chromosome integrity. Activates DnaA-dependent chromosomal DNA replication initiation ensuring that the chromosome is replicated at the right time during the cell cycle. May regulate replication initiation through phosphorylation of a possible second messenger or metabolite, and by interacting with replication initiation proteins. Has ATPase activity with D-ribose and 2-deoxy-D-ribose in vitro, but not with choline. Involved in DNA damage response. This Streptococcus pneumoniae serotype 2 (strain D39 / NCTC 7466) protein is Cell cycle regulator CcrZ.